The primary structure comprises 359 residues: Protein mab-21-like 2 (359 aa).

Belongs to the mab-21 family.

The protein localises to the nucleus. It localises to the cytoplasm. Its function is as follows. Required for several aspects of embryonic development including normal development of the eye. In Homo sapiens (Human), this protein is Protein mab-21-like 2 (MAB21L2).